Here is a 311-residue protein sequence, read N- to C-terminus: Mediator of RNA polymerase II transcription subunit 27-B (311 aa).

The protein belongs to the Mediator complex subunit 27 family. In terms of assembly, component of the Mediator complex.

The protein localises to the nucleus. Component of the Mediator complex, a coactivator involved in the regulated transcription of nearly all RNA polymerase II-dependent genes. Mediator functions as a bridge to convey information from gene-specific regulatory proteins to the basal RNA polymerase II transcription machinery. Mediator is recruited to promoters by direct interactions with regulatory proteins and serves as a scaffold for the assembly of a functional preinitiation complex with RNA polymerase II and the general transcription factors. The protein is Mediator of RNA polymerase II transcription subunit 27-B (med27-b) of Xenopus laevis (African clawed frog).